Consider the following 505-residue polypeptide: Argininosuccinate lyase (505 aa).

This sequence belongs to the lyase 1 family. Argininosuccinate lyase subfamily.

The protein resides in the cytoplasm. The catalysed reaction is 2-(N(omega)-L-arginino)succinate = fumarate + L-arginine. It participates in amino-acid biosynthesis; L-arginine biosynthesis; L-arginine from L-ornithine and carbamoyl phosphate: step 3/3. The polypeptide is Argininosuccinate lyase (Rhodococcoides fascians (Rhodococcus fascians)).